The sequence spans 169 residues: Peptide deformylase (169 aa).

Residues cysteine 91 and histidine 133 each coordinate Fe cation. Glutamate 134 is a catalytic residue. Histidine 137 serves as a coordination point for Fe cation.

It belongs to the polypeptide deformylase family. Requires Fe(2+) as cofactor.

It catalyses the reaction N-terminal N-formyl-L-methionyl-[peptide] + H2O = N-terminal L-methionyl-[peptide] + formate. In terms of biological role, removes the formyl group from the N-terminal Met of newly synthesized proteins. Requires at least a dipeptide for an efficient rate of reaction. N-terminal L-methionine is a prerequisite for activity but the enzyme has broad specificity at other positions. This is Peptide deformylase from Erwinia tasmaniensis (strain DSM 17950 / CFBP 7177 / CIP 109463 / NCPPB 4357 / Et1/99).